We begin with the raw amino-acid sequence, 125 residues long: Nuclear envelope phosphatase-regulatory subunit 1 (125 aa).

A run of 2 helical transmembrane segments spans residues 33–53 (MILIVVSVCTATGAWNWLIDP) and 65–85 (WNHPFFTISCVTLIGLFFAGI).

It belongs to the CNEP1R1 family.

It localises to the nucleus membrane. The protein resides in the cytoplasm. In terms of biological role, may form with the serine/threonine protein phosphatase ctdnep1 an active complex dephosphorylating and activating lipins. Lipins are phosphatidate phosphatases that catalyze the conversion of phosphatidic acid to diacylglycerol and control the metabolism of fatty acids at different levels. May indirectly modulate the lipid composition of nuclear and/or endoplasmic reticulum membranes and be required for proper nuclear membrane morphology and/or dynamics. May also indirectly regulate the production of lipid droplets and triacylglycerol. In Danio rerio (Zebrafish), this protein is Nuclear envelope phosphatase-regulatory subunit 1 (cnep1r1).